The sequence spans 53 residues: UPF0391 membrane protein BamMC406_6344 (53 aa).

2 helical membrane passes run 5–25 (AIIF…GIAA) and 30–50 (IAKI…LLGV).

The protein belongs to the UPF0391 family.

The protein resides in the cell membrane. The protein is UPF0391 membrane protein BamMC406_6344 of Burkholderia ambifaria (strain MC40-6).